Here is a 306-residue protein sequence, read N- to C-terminus: MTINIKTDSPIITTGSQLDAITTETVGQSGEVKKTEDTRHEAQAIKSSEASLSRSQVPELIKPSQGINVALLSKSQGDLNGTLSILLLLLELARKAREMGLQQRDIENKATISAQKEQVAEMVSGAKLMIAMAVVSGIMAATSTVASAFSIAKEVKIVKQEQILNSNIAGRDQLIDTKMQQMSNAGDKAVSREDIGRIWKPEQVADQNKLALLDKEFRMTDSKANAFNAATQPLGQMANSAIQVHQGYSQAEVKEKEVNASIAANEKQKAEEAMNYNDNFMKDVLRLIEQYVSSHTHAMKAAFGVV.

A helical transmembrane segment spans residues Leu-128–Ala-152.

Belongs to the SctB/YopD family. The core secretion machinery of the T3SS is composed of approximately 20 different proteins, including cytoplasmic components, a base, an export apparatus and a needle. This subunit is involved in the formation of a pore, called the translocon, in host membrane. Interacts with YopB/SctE and YopE. Together with YopB/SctE, forms a multimeric integral membrane complex with a mass of between 500 and 700 kDa. Interacts with its cognate chaperone SycD.

The protein localises to the secreted. It localises to the host membrane. Component of the type III secretion system (T3SS), also called injectisome, which is used to inject bacterial effector proteins into eukaryotic host cells. YopB/SctE and YopD/SctB are inserted into the host membrane where they form a pore and allow the translocation of effector proteins into the cytosol of target cells. Its function is as follows. Involved in pathogenesis. Essential for the establishment of Yersinia infections in a mouse model system, but not for the targeting of effector Yops. May modulate the host's immune response at a distance from the site of infection. This is Type 3 secretion system translocon protein SctB from Yersinia enterocolitica.